A 143-amino-acid chain; its full sequence is MKNIVLASLLGFGLISSAWATETVNIHERVNNAQAPAHQMQSAAAPVGIQGTAPRMAGMDQHEQAIIAHETMTNGSADAHQKMVESHQRMMGSQTVSPTGPSKSLAAMNEHERAAVAHEFMNNGQSGPHQAMAEAHRRMLSAG.

The signal sequence occupies residues 1–20; it reads MKNIVLASLLGFGLISSAWA.

This sequence to E.coli PcoE.

Its subcellular location is the periplasm. Component of the sil cation-efflux system that confers resistance to silver. The chain is Silver-binding protein SilE (silE) from Salmonella typhimurium.